A 121-amino-acid polypeptide reads, in one-letter code: Small ribosomal subunit protein uS13 (121 aa).

The tract at residues 92–121 (RKGLPMRGQRTRTNARTRKGPRRAAQALKK) is disordered.

This sequence belongs to the universal ribosomal protein uS13 family. In terms of assembly, part of the 30S ribosomal subunit. Forms a loose heterodimer with protein S19. Forms two bridges to the 50S subunit in the 70S ribosome.

Its function is as follows. Located at the top of the head of the 30S subunit, it contacts several helices of the 16S rRNA. In the 70S ribosome it contacts the 23S rRNA (bridge B1a) and protein L5 of the 50S subunit (bridge B1b), connecting the 2 subunits; these bridges are implicated in subunit movement. Contacts the tRNAs in the A and P-sites. In Burkholderia cenocepacia (strain HI2424), this protein is Small ribosomal subunit protein uS13.